The primary structure comprises 279 residues: Toxin TxP-I (279 aa).

The first 14 residues, 1–14 (MNLFFLFIIPTILA), serve as a signal peptide directing secretion. Residues 15 to 27 (VKPFRSFNNISLI) constitute a propeptide that is removed on maturation.

Contains several disulfide bonds. Posterior glands which appear to be connected with the stylet through a series of ducts.

It is found in the secreted. Functionally, part of a complex mixture of neurotoxins which P.tritici utilizes to capture prey. It has contracting-paralyzing activity in insects. The polypeptide is Toxin TxP-I (Pyemotes tritici (Straw itch mite)).